A 20-amino-acid polypeptide reads, in one-letter code: Phospholipase A2 D5 (20 aa).

Ca(2+) serves as cofactor. Post-translationally, contains seven disulfide bonds. Expressed by the venom gland.

It localises to the secreted. It carries out the reaction a 1,2-diacyl-sn-glycero-3-phosphocholine + H2O = a 1-acyl-sn-glycero-3-phosphocholine + a fatty acid + H(+). PLA2 catalyzes the calcium-dependent hydrolysis of the 2-acyl groups in 3-sn-phosphoglycerides. The polypeptide is Phospholipase A2 D5 (Micrurus pyrrhocryptus (Coral snake)).